A 247-amino-acid chain; its full sequence is Triosephosphate isomerase (247 aa).

The substrate site is built by Asn-10 and Lys-12. His-94 functions as the Electrophile in the catalytic mechanism. Glu-164 acts as the Proton acceptor in catalysis.

Belongs to the triosephosphate isomerase family. Homodimer.

The catalysed reaction is D-glyceraldehyde 3-phosphate = dihydroxyacetone phosphate. It functions in the pathway carbohydrate biosynthesis; gluconeogenesis. Its pathway is carbohydrate degradation; glycolysis; D-glyceraldehyde 3-phosphate from glycerone phosphate: step 1/1. The sequence is that of Triosephosphate isomerase (Tpi) from Drosophila melanogaster (Fruit fly).